A 115-amino-acid chain; its full sequence is NADH-ubiquinone oxidoreductase chain 3 (115 aa).

A run of 3 helical transmembrane segments spans residues 3 to 23 (LMAT…IAFW), 55 to 75 (FFLV…LLPL), and 86 to 106 (LTLL…AYEW).

It belongs to the complex I subunit 3 family. In terms of assembly, core subunit of respiratory chain NADH dehydrogenase (Complex I) which is composed of 45 different subunits. Interacts with TMEM186. Interacts with TMEM242.

Its subcellular location is the mitochondrion inner membrane. It catalyses the reaction a ubiquinone + NADH + 5 H(+)(in) = a ubiquinol + NAD(+) + 4 H(+)(out). Functionally, core subunit of the mitochondrial membrane respiratory chain NADH dehydrogenase (Complex I) which catalyzes electron transfer from NADH through the respiratory chain, using ubiquinone as an electron acceptor. Essential for the catalytic activity of complex I. The polypeptide is NADH-ubiquinone oxidoreductase chain 3 (Mammuthus primigenius (Siberian woolly mammoth)).